The following is a 66-amino-acid chain: Large ribosomal subunit protein bL35 (66 aa).

It belongs to the bacterial ribosomal protein bL35 family.

This Deinococcus deserti (strain DSM 17065 / CIP 109153 / LMG 22923 / VCD115) protein is Large ribosomal subunit protein bL35.